The following is an 871-amino-acid chain: DNA mismatch repair protein MutS (871 aa).

ATP is bound at residue 616–623 (GPNMAGKS). The interval 801 to 825 (ETEKTEESMEGTNLPKKKKEEKTSS) is disordered.

Belongs to the DNA mismatch repair MutS family.

Its function is as follows. This protein is involved in the repair of mismatches in DNA. It is possible that it carries out the mismatch recognition step. This protein has a weak ATPase activity. The polypeptide is DNA mismatch repair protein MutS (Clostridium kluyveri (strain NBRC 12016)).